A 217-amino-acid chain; its full sequence is MKSTVEQAMLFEEKSIFENQAIEQGYSRVAGVDEAGRGPLAGPVVAGACILPRGKVFLGIDDSKKLTPKQRRYLYELLLEDPEVDCGVGVVSVERIDEINILEATKEAMVQAIASLQSTPDFLLVDGLFLPHKVPSLKIIKGDARSVSIAAASIIAKEYRDELMRKLHVEYPEYGFDKHKGYGTAAHLQALKHFGPCVYHRKSFSPVKESIQEGVCQ.

The region spanning 27–216 (SRVAGVDEAG…VKESIQEGVC (190 aa)) is the RNase H type-2 domain. A divalent metal cation-binding residues include D33, E34, and D126.

Belongs to the RNase HII family. The cofactor is Mn(2+). Mg(2+) is required as a cofactor.

The protein localises to the cytoplasm. It catalyses the reaction Endonucleolytic cleavage to 5'-phosphomonoester.. In terms of biological role, endonuclease that specifically degrades the RNA of RNA-DNA hybrids. This chain is Ribonuclease HII, found in Chlamydia trachomatis serovar A (strain ATCC VR-571B / DSM 19440 / HAR-13).